The primary structure comprises 339 residues: Fructose-1,6-bisphosphatase class 1 (339 aa).

Glu92, Asp114, Leu116, and Asp117 together coordinate Mg(2+). Substrate contacts are provided by residues 117-120 (DGSS), Asn209, and Lys275. Glu281 contributes to the Mg(2+) binding site.

It belongs to the FBPase class 1 family. Homotetramer. It depends on Mg(2+) as a cofactor.

The protein resides in the cytoplasm. The catalysed reaction is beta-D-fructose 1,6-bisphosphate + H2O = beta-D-fructose 6-phosphate + phosphate. It functions in the pathway carbohydrate biosynthesis; gluconeogenesis. In Acidithiobacillus ferrooxidans (strain ATCC 53993 / BNL-5-31) (Leptospirillum ferrooxidans (ATCC 53993)), this protein is Fructose-1,6-bisphosphatase class 1.